We begin with the raw amino-acid sequence, 87 residues long: Kawaguchipeptin peptide (87 aa).

The propeptide occupies 1-33; it reads MKNPTLLPKLTAPVERPAVTSSDLKQASSVDAA. Tryptophan 34 is lipidated: 3'-prenyl-2',N2-cyclotryptophan; partial. A cross-link (cyclopeptide (Trp-Pro)) is located at residues 34 to 44; that stretch reads WLNGDNNWSTP. Leucine 35 carries the post-translational modification D-leucine; partial. The 3'-prenyl-2',N2-cyclotryptophan; partial moiety is linked to residue tryptophan 41. Residues 45–51 constitute a propeptide that is removed on maturation; that stretch reads FAGVNAA. Tryptophan 52 carries 3'-prenyl-2',N2-cyclotryptophan; partial lipidation. A cross-link (cyclopeptide (Trp-Pro)) is located at residues 52–62; the sequence is WLNGDNNWSTP. At leucine 53 the chain carries D-leucine; partial. A lipid anchor (3'-prenyl-2',N2-cyclotryptophan; partial) is attached at tryptophan 59. Residues 63–69 constitute a propeptide that is removed on maturation; the sequence is FAGVNAA. Residue tryptophan 70 is the site of 3'-prenyl-2',N2-cyclotryptophan; partial attachment. A cross-link (cyclopeptide (Trp-Pro)) is located at residues 70 to 80; sequence WLNGDNNWSTP. At leucine 71 the chain carries D-leucine; partial. Tryptophan 77 carries 3'-prenyl-2',N2-cyclotryptophan; partial lipidation. Residues 81 to 87 constitute a propeptide that is removed on maturation; it reads FAADGAE.

Kawaguchipeptin A contains a D-Leu and 2 prenylated Trp, whereas kawaguchipeptin B only contains unmodified amino acids. Post-translationally, kawaguchipeptin A is prenylated in vivo. Upon expression in E.coli of the whole operon, Trp residues are prenylated by C-prenyltransferase KgpF. Prenylation by KgpF is likely the last enzymatic step in the biosynthetic maturation of kawaguchipeptin A.

In terms of biological role, both kawaguchipeptin A and B, which only differ by post-translational modifications, have antibacterial activities, since they inhibit the growth of the Gram-positive bacterium S.aureus at a concentration of 1 ug/mL. The protein is Kawaguchipeptin peptide of Microcystis aeruginosa (strain NIES-88 / KW-MA1-3).